A 107-amino-acid polypeptide reads, in one-letter code: Nucleoid-associated protein GbCGDNIH1_0260 (107 aa).

It belongs to the YbaB/EbfC family. As to quaternary structure, homodimer.

The protein resides in the cytoplasm. It localises to the nucleoid. In terms of biological role, binds to DNA and alters its conformation. May be involved in regulation of gene expression, nucleoid organization and DNA protection. The chain is Nucleoid-associated protein GbCGDNIH1_0260 from Granulibacter bethesdensis (strain ATCC BAA-1260 / CGDNIH1).